The following is a 199-amino-acid chain: uncharacterized protein (199 aa).

The Nudix hydrolase domain occupies 38–169 (NRRAAVLIPI…SLDIHREGIN (132 aa)). The Nudix box signature appears at 76 to 98 (GKADPDDQSLISTALREAEEEVA). Positions 92 and 96 each coordinate Mg(2+).

This sequence belongs to the Nudix hydrolase family. PCD1 subfamily. Mn(2+) serves as cofactor. Mg(2+) is required as a cofactor.

Its function is as follows. Probably mediates the hydrolysis of some nucleoside diphosphate derivatives. This is an uncharacterized protein from Yersinia pseudotuberculosis serotype I (strain IP32953).